Consider the following 231-residue polypeptide: Large ribosomal subunit protein uL1 (231 aa).

Belongs to the universal ribosomal protein uL1 family. As to quaternary structure, part of the 50S ribosomal subunit.

In terms of biological role, binds directly to 23S rRNA. The L1 stalk is quite mobile in the ribosome, and is involved in E site tRNA release. Protein L1 is also a translational repressor protein, it controls the translation of the L11 operon by binding to its mRNA. The polypeptide is Large ribosomal subunit protein uL1 (Methylococcus capsulatus (strain ATCC 33009 / NCIMB 11132 / Bath)).